The sequence spans 217 residues: MKIVIADDHAVVRTGFSMILNYQNDMEVVATAADGVEAYQKVMEYKPDVLLMDLSMPPGESGLIATSKIADSFPETKILILTMFDDEEYLFHVLRNGAKGYILKNAPDEQLLLAIRTVYKGETYVDMKLTTSLVNEFVSNSNQDTANTSDPFKILSKRELEILPLIAKGYGNKEIAEKLFVSVKTVEAHKTHIMTKLGLKSKPELVEYALKKKLLEF.

Residues Lys2–Tyr119 enclose the Response regulatory domain. At Asp53 the chain carries 4-aspartylphosphate. An HTH luxR-type domain is found at Thr148–Lys213. Positions Asn172 to Thr191 form a DNA-binding region, H-T-H motif.

In terms of processing, phosphorylated by NreB.

It localises to the cytoplasm. Functionally, member of the two-component regulatory system NreB/NreC involved in the control of dissimilatory nitrate/nitrite reduction in response to oxygen. Phosphorylated NreC binds to a GC-rich palindromic sequence at the promoters of the nitrate (narGHJI) and nitrite (nir) reductase operons, as well as the putative nitrate transporter gene narT, and activates their expression. The polypeptide is Oxygen regulatory protein NreC (nreC) (Staphylococcus aureus (strain bovine RF122 / ET3-1)).